A 179-amino-acid polypeptide reads, in one-letter code: Large ribosomal subunit protein uL5 (179 aa).

The protein belongs to the universal ribosomal protein uL5 family. Part of the 50S ribosomal subunit; part of the 5S rRNA/L5/L18/L25 subcomplex. Contacts the 5S rRNA and the P site tRNA. Forms a bridge to the 30S subunit in the 70S ribosome.

Its function is as follows. This is one of the proteins that bind and probably mediate the attachment of the 5S RNA into the large ribosomal subunit, where it forms part of the central protuberance. In the 70S ribosome it contacts protein S13 of the 30S subunit (bridge B1b), connecting the 2 subunits; this bridge is implicated in subunit movement. Contacts the P site tRNA; the 5S rRNA and some of its associated proteins might help stabilize positioning of ribosome-bound tRNAs. In Bacillus pumilus (strain SAFR-032), this protein is Large ribosomal subunit protein uL5.